The following is a 395-amino-acid chain: uncharacterized protein (395 aa).

A coiled-coil region spans residues 182–238; sequence KKLEDILSTIAEIEDSIELEKILSLDQFLKSKLSNIKITNNQIDEAKAEFKEMFNKK.

This is an uncharacterized protein from Acanthamoeba polyphaga (Amoeba).